A 286-amino-acid polypeptide reads, in one-letter code: Peroxisomal membrane protein pex14 (286 aa).

The SH3-binding motif lies at 61-69 (TSNFVSRDW). A coiled-coil region spans residues 122–214 (KILENLDEQT…REISSLRCLQ (93 aa)). The tract at residues 218–239 (KKDDTFATTSNSSIPVLENPLD) is disordered.

It belongs to the peroxin-14 family. Interacts with PEX13 (via SH3 domain); forming the PEX13-PEX14 docking complex. Interacts with PEX5 (via WxxxF/Y motifs).

Its subcellular location is the peroxisome membrane. In terms of biological role, component of the PEX13-PEX14 docking complex, a translocon channel that specifically mediates the import of peroxisomal cargo proteins bound to PEX5 receptor. The PEX13-PEX14 docking complex forms a large import pore which can be opened to a diameter of about 9 nm. Mechanistically, PEX5 receptor along with cargo proteins associates with the PEX14 subunit of the PEX13-PEX14 docking complex in the cytosol, leading to the insertion of the receptor into the organelle membrane with the concomitant translocation of the cargo into the peroxisome matrix. The polypeptide is Peroxisomal membrane protein pex14 (pex14) (Schizosaccharomyces pombe (strain 972 / ATCC 24843) (Fission yeast)).